The chain runs to 71 residues: Translation initiation factor IF-1 (71 aa).

The region spanning 1-71 (MSKDDLIQFT…LTKGRVIHRH (71 aa)) is the S1-like domain.

Belongs to the IF-1 family. As to quaternary structure, component of the 30S ribosomal translation pre-initiation complex which assembles on the 30S ribosome in the order IF-2 and IF-3, IF-1 and N-formylmethionyl-tRNA(fMet); mRNA recruitment can occur at any time during PIC assembly.

The protein resides in the cytoplasm. One of the essential components for the initiation of protein synthesis. Stabilizes the binding of IF-2 and IF-3 on the 30S subunit to which N-formylmethionyl-tRNA(fMet) subsequently binds. Helps modulate mRNA selection, yielding the 30S pre-initiation complex (PIC). Upon addition of the 50S ribosomal subunit IF-1, IF-2 and IF-3 are released leaving the mature 70S translation initiation complex. This chain is Translation initiation factor IF-1, found in Rickettsia canadensis (strain McKiel).